The chain runs to 211 residues: Uracil phosphoribosyltransferase (211 aa).

Residues arginine 78, arginine 103, and 130-138 (DPMLATGSS) each bind 5-phospho-alpha-D-ribose 1-diphosphate. Residues isoleucine 193 and 198 to 200 (GDA) each bind uracil. Residue aspartate 199 coordinates 5-phospho-alpha-D-ribose 1-diphosphate.

This sequence belongs to the UPRTase family. The cofactor is Mg(2+).

It catalyses the reaction UMP + diphosphate = 5-phospho-alpha-D-ribose 1-diphosphate + uracil. It participates in pyrimidine metabolism; UMP biosynthesis via salvage pathway; UMP from uracil: step 1/1. Allosterically activated by GTP. Catalyzes the conversion of uracil and 5-phospho-alpha-D-ribose 1-diphosphate (PRPP) to UMP and diphosphate. The sequence is that of Uracil phosphoribosyltransferase from Acinetobacter baylyi (strain ATCC 33305 / BD413 / ADP1).